The following is a 365-amino-acid chain: WAT1-related protein At1g01070 (365 aa).

10 consecutive transmembrane segments (helical) span residues 14-34, 46-66, 83-103, 107-127, 139-159, 189-209, 221-241, 255-275, 285-305, and 310-330; these read YSPV…NALV, VIGA…AYVL, FVSG…GLSY, TVSC…ALIF, AGML…FLTF, WLLG…WMLF, YSST…LSLY, FVIT…TVAT, VFAS…DFLI, and LYLG…MFLW. An EamA 1 domain is found at 27 to 157; it reads MGSVNALVKK…LICISGALFL (131 aa). The region spanning 223–329 is the EamA 2 domain; the sequence is STCLMSIFAA…VTITGLYMFL (107 aa). Polar residues predominate over residues 340-356; the sequence is TALSSGMDNEAQYTTPN. The segment at 340–365 is disordered; sequence TALSSGMDNEAQYTTPNKDNDSKSPV.

This sequence belongs to the drug/metabolite transporter (DMT) superfamily. Plant drug/metabolite exporter (P-DME) (TC 2.A.7.4) family.

It is found in the membrane. This chain is WAT1-related protein At1g01070, found in Arabidopsis thaliana (Mouse-ear cress).